A 606-amino-acid polypeptide reads, in one-letter code: Mitogen-activated protein kinase kinase kinase 7 (606 aa).

Positions 1–300 (MSTASAASSS…FPGADEPLQY (300 aa)) are interaction with MAPK8IP1. The Protein kinase domain maps to 36–291 (IEVEEVVGRG…KIMTHLMRYF (256 aa)). ATP-binding positions include 42 to 50 (VGRGAFGVV) and Lys-63. Lys-72 is covalently cross-linked (Glycyl lysine isopeptide (Lys-Gly) (interchain with G-Cter in ubiquitin)). Asp-156 acts as the Proton acceptor in catalysis. Lys-158 participates in a covalent cross-link: Glycyl lysine isopeptide (Lys-Gly) (interchain with G-Cter in ubiquitin). (Microbial infection) O-acetylthreonine; by Yersinia YopJ; alternate occurs at positions 184 and 187. Residues Thr-184 and Thr-187 each carry the phosphothreonine; by autocatalysis; alternate modification. Ser-192 is modified (phosphoserine; by autocatalysis). Lys-209 participates in a covalent cross-link: Glycyl lysine isopeptide (Lys-Gly) (interchain with G-Cter in ubiquitin). The interval 301 to 338 (PCQYSDEGQSNSATSTGSFMDIASTNTSNKSDTNMEQV) is disordered. Over residues 306–338 (DEGQSNSATSTGSFMDIASTNTSNKSDTNMEQV) the composition is skewed to polar residues. Thr-341 is subject to (Microbial infection) O-acetylthreonine; by Yersinia YopJ; alternate. The tract at residues 354–391 (KNQAKQQSESGRLSLGASRGSSVESLPPTSEGKRMSAD) is disordered. A compositionally biased stretch (low complexity) spans 361–375 (SESGRLSLGASRGSS). Ser-367, Ser-389, and Ser-439 each carry phosphoserine. Over residues 443–452 (LTVTGTEPGQ) the composition is skewed to polar residues. Residues 443-493 (LTVTGTEPGQVSSRSSSPSVRMITTSGPTSEKPTRSHPWTPDDSTDTNGSD) form a disordered region. Residues Thr-444, Thr-446, and Thr-448 each carry the (Microbial infection) O-acetylthreonine; by Yersinia YopJ; alternate modification. A compositionally biased stretch (low complexity) spans 453 to 463 (VSSRSSSPSVR). Phosphoserine is present on Ser-455. A compositionally biased stretch (polar residues) spans 464–473 (MITTSGPTSE). Thr-467 is subject to (Microbial infection) O-acetylthreonine; by Yersinia YopJ; alternate.

It belongs to the protein kinase superfamily. STE Ser/Thr protein kinase family. MAP kinase kinase kinase subfamily. Can form homodimer. Binds both upstream activators and downstream substrates in multimolecular complexes. Interacts with TAB1/MAP3K7IP1, TAB2/MAP3K7IP2 and TAB3/MAP3K7IP3. Identified in the TRIKA2 complex composed of MAP3K7/TAK1, TAB1/MAP3K7IP1 and TAB2/MAP3K7IP2. Interacts with PPM1L and PPM1B/PP2CB. Interaction with PP2A and PPP6C leads to its repressed activity. Interacts with TRAF6 and TAB1/MAP3K7IP1; during IL-1 signaling. Interacts with TAOK1 and TAOK2; interaction with TAOK2 interferes with MAP3K7 interaction with IKKA, thus preventing NF-kappa-B activation. Interacts with DYNC2I2 (via WD domains). Interacts with CYLD and RBCK1. Interacts with TGFBR1; induces MAP3K7/TAK1 activation by TRAF6. Interacts with MAPK8IP1 and SMAD6. Interacts with isoform 1 of VRK2. Interacts with DAB2; the interaction is induced by TGF-beta stimulation and may mediate TGF-beta stimulated JNK activation. Interacts with TRIM5. Part of a complex containing ITCH, NDFIP1 and MAP3K7. Interacts with IFIT5; the interaction synergizes the recruitment of IKK to MAP3K7 and enhances IKK phosphorylation. Interacts with PLEKHM1 (via N- and C-terminus). Interacts with TRIM8. Found in a complex with SH3RF1, RAC2, MAP2K7/MKK7, MAPK8IP1/JIP1, MAPK8/JNK1 and MAPK9/JNK2. Interacts with SASH1. Interacts with RIPK1. In terms of assembly, (Microbial infection) Interacts with herpes simplex virus 2 protein US2; this interaction induces MAP3K7 phosphorylation and subsequent activation. The cofactor is Mg(2+). In terms of processing, association with TAB1/MAP3K7IP1 promotes autophosphorylation at Ser-192 and subsequent activation. Association with TAB2/MAP3K7IP2, itself associated with free unanchored Lys-63 polyubiquitin chain, promotes autophosphorylation and subsequent activation of MAP3K7. Dephosphorylation at Ser-192 by PPM1B/PP2CB and at Thr-187 by PP2A and PPP6C leads to inactivation. Post-translationally, 'Lys-48'-linked polyubiquitination at Lys-72 is induced by TNFalpha, and leads to proteasomal degradation. Undergoes 'Lys-48'-linked polyubiquitination catalyzed by ITCH. Requires 'Lys-63'-linked polyubiquitination for autophosphorylation and subsequent activation. 'Lys-63'-linked ubiquitination does not lead to proteasomal degradation. Deubiquitinated by CYLD, a protease that selectively cleaves 'Lys-63'-linked ubiquitin chains. Deubiquitinated by Y.enterocolitica YopP. Deubiquitinated by USP19; leading to negative regulation of TNF-alpha- and IL-1beta-triggered NF-kappa-B activation. (Microbial infection) Cleaved and inactivated by the proteases 3C of coxsackievirus A16 and human enterovirus D68, allowing the virus to disrupt TRAF6-triggered NF-kappa-B induction. In terms of processing, (Microbial infection) Acetylation of Thr-184 and Thr-187 by Yersinia YopJ prevents phosphorylation and activation, thus blocking the MAPK signaling pathway. In terms of tissue distribution, isoform 1A is the most abundant in ovary, skeletal muscle, spleen and blood mononuclear cells. Isoform 1B is highly expressed in brain, kidney and small intestine. Isoform 1C is the major form in prostate. Isoform 1D is the less abundant form.

The protein resides in the cytoplasm. The protein localises to the cell membrane. The enzyme catalyses L-seryl-[protein] + ATP = O-phospho-L-seryl-[protein] + ADP + H(+). It carries out the reaction L-threonyl-[protein] + ATP = O-phospho-L-threonyl-[protein] + ADP + H(+). With respect to regulation, activated by pro-inflammatory cytokines and in response to physical and chemical stresses, including osmotic stress, oxidative stress, arsenic and ultraviolet light irradiation. Activated by 'Lys-63'-linked polyubiquitination and by autophosphorylation. Association with TAB1/MAP3K7IP1 and TAB2/MAP3K7IP2 promotes activation through autophosphorylation, whereas PPM1B/PP2CB, PP2A and PPP6C dephosphorylation leads to inactivation. Ceramides are also able to activate MAP3K7/TAK1. Serine/threonine kinase which acts as an essential component of the MAP kinase signal transduction pathway. Plays an important role in the cascades of cellular responses evoked by changes in the environment. Mediates signal transduction of TRAF6, various cytokines including interleukin-1 (IL-1), transforming growth factor-beta (TGFB), TGFB-related factors like BMP2 and BMP4, toll-like receptors (TLR), tumor necrosis factor receptor CD40 and B-cell receptor (BCR). Once activated, acts as an upstream activator of the MKK/JNK signal transduction cascade and the p38 MAPK signal transduction cascade through the phosphorylation and activation of several MAP kinase kinases like MAP2K1/MEK1, MAP2K3/MKK3, MAP2K6/MKK6 and MAP2K7/MKK7. These MAP2Ks in turn activate p38 MAPKs and c-jun N-terminal kinases (JNKs); both p38 MAPK and JNK pathways control the transcription factors activator protein-1 (AP-1). Independently of MAP2Ks and p38 MAPKs, acts as a key activator of NF-kappa-B by promoting activation of the I-kappa-B-kinase (IKK) core complex. Mechanistically, recruited to polyubiquitin chains of RIPK2 and IKBKG/NEMO via TAB2/MAP3K7IP2 and TAB3/MAP3K7IP3, and catalyzes phosphorylation and activation of IKBKB/IKKB component of the IKK complex, leading to NF-kappa-B activation. In osmotic stress signaling, plays a major role in the activation of MAPK8/JNK1, but not that of NF-kappa-B. Promotes TRIM5 capsid-specific restriction activity. Phosphorylates RIPK1 at 'Ser-321' which positively regulates RIPK1 interaction with RIPK3 to promote necroptosis but negatively regulates RIPK1 kinase activity and its interaction with FADD to mediate apoptosis. Phosphorylates STING1 in response to cGAMP-activation, promoting association between STEEP1 and STING1 and STING1 translocation to COPII vesicles. The chain is Mitogen-activated protein kinase kinase kinase 7 from Homo sapiens (Human).